Here is a 692-residue protein sequence, read N- to C-terminus: Sodium- and chloride-dependent glycine transporter 1 (692 aa).

A disordered region spans residues 1–34; the sequence is MIGGDTRAASAHPGMASAQGPVATPSPEQPFPGT. The Cytoplasmic portion of the chain corresponds to 1–94; sequence MIGGDTRAAS…TRGNWGNQIE (94 aa). 3 helical membrane passes run 95–115, 122–142, and 174–194; these read FVLTSVGYAVGLGNVWRFPYL, GAFMFPYFIMLIFCGIPLFFM, and VSTYIGIYYNVVICIAFYYFF. Topologically, residues 195-271 are extracellular; the sequence is SSMTHVLPWA…LSDDIGNFGE (77 aa). The next 9 membrane-spanning stretches (helical) occupy residues 272 to 292, 301 to 321, 346 to 366, 393 to 413, 436 to 456, 492 to 512, 516 to 536, 556 to 576, and 596 to 616; these read VRLPLLGCLGVSWVVVFLCLI, VVYFTATFPYVVLTILFVRGV, VWGDAASQIFYSLGCAWGGLI, SVYAGFVIFSILGFMANHLGV, LLPISPLWSLLFFFMLILLGL, VAGFLLGIPLTSQAGIYWLLL, YAASFSLVVISCIMCVSIMYI, LFFQICWRFVSPAIIFFILIF, and VAIGFLMALSSVICIPLYALF. The Cytoplasmic segment spans residues 617-692; it reads QLCRTDGDTL…GSSRFQDSRI (76 aa). Residue Thr-657 is modified to Phosphothreonine. Phosphoserine is present on residues Ser-659 and Ser-684. The tract at residues 681–692 is essential for interaction with EXOC1; that stretch reads SNGSSRFQDSRI.

This sequence belongs to the sodium:neurotransmitter symporter (SNF) (TC 2.A.22) family. SLC6A9 subfamily. In terms of assembly, interacts with EXOC1; interaction increases the transporter capacity of SLC6A9 probably by promoting its insertion into the cell membrane. Interacts with EXOC3 and EXOC4. Expressed in the brain (at protein level). At 11 dpc, expressed in the ventral part of the ventricular zone. At 15 dpc, also expressed in adjacent mantle tissue and the meninges. Strongly expressed in 12 dpc and 15 dpc liver. As to expression, expressed in the brain.

The protein localises to the cell membrane. It carries out the reaction glycine(out) + chloride(out) + 2 Na(+)(out) = glycine(in) + chloride(in) + 2 Na(+)(in). Functionally, sodium- and chloride-dependent glycine transporter which is essential for regulating glycine concentrations at inhibitory glycinergic synapses. Its function is as follows. Sodium- and chloride-dependent glycine transporter. The chain is Sodium- and chloride-dependent glycine transporter 1 (Slc6a9) from Mus musculus (Mouse).